The following is a 307-amino-acid chain: 2-methoxy-6-polyprenyl-1,4-benzoquinol methylase, mitochondrial (307 aa).

The transit peptide at 1–19 (MLISSRIVRSSLVNVPLRL) directs the protein to the mitochondrion. Residues Ser122, Asp148, 179–180 (NG), and Ser197 each bind S-adenosyl-L-methionine.

It belongs to the class I-like SAM-binding methyltransferase superfamily. MenG/UbiE family. In terms of assembly, component of a multi-subunit COQ enzyme complex, composed of at least COQ3, COQ4, COQ5, COQ6, COQ7 and COQ9. Interacts with COQ3.

It is found in the mitochondrion inner membrane. The enzyme catalyses 2-methoxy-6-(all-trans-hexaprenyl)benzene-1,4-diol + S-adenosyl-L-methionine = 5-methoxy-2-methyl-3-(all-trans-hexaprenyl)benzene-1,4-diol + S-adenosyl-L-homocysteine + H(+). Its pathway is cofactor biosynthesis; ubiquinone biosynthesis. Methyltransferase required for the conversion of 2-hexaprenyl-6-methoxy-1,4-benzoquinol (DDMQH2) to 2-hexaprenyl-3-methyl-6-methoxy-1,4-benzoquinol (DMQH2). This chain is 2-methoxy-6-polyprenyl-1,4-benzoquinol methylase, mitochondrial, found in Saccharomyces cerevisiae (strain ATCC 204508 / S288c) (Baker's yeast).